Reading from the N-terminus, the 394-residue chain is 1-deoxy-D-xylulose 5-phosphate reductoisomerase (394 aa).

The NADPH site is built by Thr13, Gly14, Ser15, Val16, Arg40, Gln41, and Asn127. Lys128 contacts 1-deoxy-D-xylulose 5-phosphate. Position 129 (Glu129) interacts with NADPH. Asp153 is a Mn(2+) binding site. 4 residues coordinate 1-deoxy-D-xylulose 5-phosphate: Ser154, Glu155, Ser184, and His207. Glu155 contributes to the Mn(2+) binding site. Gly213 lines the NADPH pocket. 4 residues coordinate 1-deoxy-D-xylulose 5-phosphate: Ser220, Asn225, Lys226, and Glu229. Mn(2+) is bound at residue Glu229.

Belongs to the DXR family. Requires Mg(2+) as cofactor. It depends on Mn(2+) as a cofactor.

It carries out the reaction 2-C-methyl-D-erythritol 4-phosphate + NADP(+) = 1-deoxy-D-xylulose 5-phosphate + NADPH + H(+). The protein operates within isoprenoid biosynthesis; isopentenyl diphosphate biosynthesis via DXP pathway; isopentenyl diphosphate from 1-deoxy-D-xylulose 5-phosphate: step 1/6. Catalyzes the NADPH-dependent rearrangement and reduction of 1-deoxy-D-xylulose-5-phosphate (DXP) to 2-C-methyl-D-erythritol 4-phosphate (MEP). The protein is 1-deoxy-D-xylulose 5-phosphate reductoisomerase of Chromobacterium violaceum (strain ATCC 12472 / DSM 30191 / JCM 1249 / CCUG 213 / NBRC 12614 / NCIMB 9131 / NCTC 9757 / MK).